The primary structure comprises 78 residues: U-scoloptoxin(04)-Er1e (78 aa).

The N-terminal stretch at 1 to 24 is a signal peptide; it reads MTRHLIFAAMLLVCLFVCWNAVGA. A propeptide spanning residues 25–28 is cleaved from the precursor; that stretch reads RDAR.

This sequence belongs to the scoloptoxin-04 family. Post-translationally, contains 2 disulfide bonds. In terms of tissue distribution, expressed by the venom gland.

It is found in the secreted. The protein is U-scoloptoxin(04)-Er1e of Ethmostigmus rubripes (Giant centipede).